A 346-amino-acid polypeptide reads, in one-letter code: UPF0718 protein YraQ (346 aa).

A run of 9 helical transmembrane segments spans residues 12–32 (PIQWWKPALFFLVVIAGLWYV), 71–91 (MIYFLAVWKAAVLGVILGSLI), 113–133 (LLGTLFSLPGMMCTCCAAPVA), 146–166 (ALAFWMGNPVLNPATLVFMGF), 167–187 (VLGWGFAAIRLVAGLVMVLLI), 223–243 (ALWTLFWSTIPVYILAVLVLG), 260–280 (SLMWVVAMAVAGCLFVIPTAA), 296–316 (APALALLMTLPAVSLPSLIML), and 326–346 (WLTGAMVAVSGVIVGGLALLF).

Belongs to the UPF0718 family.

The protein localises to the cell membrane. In Escherichia coli (strain K12), this protein is UPF0718 protein YraQ (yraQ).